The following is a 293-amino-acid chain: 4-diphosphocytidyl-2-C-methyl-D-erythritol kinase (293 aa).

The active site involves lysine 16. An ATP-binding site is contributed by 99–109 (PMGAGLGGGSS). The active site involves aspartate 141.

This sequence belongs to the GHMP kinase family. IspE subfamily.

It carries out the reaction 4-CDP-2-C-methyl-D-erythritol + ATP = 4-CDP-2-C-methyl-D-erythritol 2-phosphate + ADP + H(+). Its pathway is isoprenoid biosynthesis; isopentenyl diphosphate biosynthesis via DXP pathway; isopentenyl diphosphate from 1-deoxy-D-xylulose 5-phosphate: step 3/6. Catalyzes the phosphorylation of the position 2 hydroxy group of 4-diphosphocytidyl-2C-methyl-D-erythritol. The polypeptide is 4-diphosphocytidyl-2-C-methyl-D-erythritol kinase (Burkholderia mallei (strain NCTC 10247)).